Reading from the N-terminus, the 816-residue chain is Sucrose synthase 1 (816 aa).

Residues 280–757 are GT-B glycosyltransferase; it reads MVFNVVIMSP…GLQRIEEKYT (478 aa).

It belongs to the glycosyltransferase 1 family. Plant sucrose synthase subfamily. As to quaternary structure, homotetramer or heterotetramer with SUS2. In terms of tissue distribution, expressed in root phloem and leaf mesophyll. Expressed in phloem tissues and aleurone layers of seeds and at lower levels in the pericarp and endosperm cells (at protein level). Predominantly expressed in elongating tissues including roots, developing leaves and internodes.

The catalysed reaction is an NDP-alpha-D-glucose + D-fructose = a ribonucleoside 5'-diphosphate + sucrose + H(+). In terms of biological role, sucrose-cleaving enzyme that provides UDP-glucose and fructose for various metabolic pathways. The protein is Sucrose synthase 1 (SUS1) of Oryza sativa subsp. japonica (Rice).